The following is a 254-amino-acid chain: MAYSKIRQPKLSDVIEQQLEFLILEGTLRPGEKLPPERELAKQFDVSRPSLREAIQRLEAKGLLLRRQGGGTFVQSSLWQSFSDPLVELLSDHPESQYDLLETRHALEGIAAYYAALRSTDEDKERIRELHHAIELAQQSGDLDAESNAVLQYQIAVTEAAHNVVLLHLLRCMEPMLAQNVRQNFELLYSRREMLPLVSSHRTRIFEAIMAGKPEEAREASHRHLAFIEEILLDRSREESRRERSLRRLEQRKN.

The region spanning 9–77 (PKLSDVIEQQ…QGGGTFVQSS (69 aa)) is the HTH gntR-type domain. The H-T-H motif DNA-binding region spans 37 to 56 (ERELAKQFDVSRPSLREAIQ).

Functionally, transcriptional repressor for the pyruvate dehydrogenase complex genes aceEF and lpd. This is Pyruvate dehydrogenase complex repressor (pdhR) from Escherichia coli O6:H1 (strain CFT073 / ATCC 700928 / UPEC).